A 458-amino-acid chain; its full sequence is Bifunctional protein GlmU (458 aa).

A pyrophosphorylase region spans residues 1-229 (MNKFAIVLAA…FDESLGVNDR (229 aa)). UDP-N-acetyl-alpha-D-glucosamine is bound by residues 8–11 (LAAG), lysine 22, glutamine 72, and 77–78 (GT). Residue aspartate 102 coordinates Mg(2+). Residues glycine 139, glutamate 154, asparagine 169, and asparagine 227 each contribute to the UDP-N-acetyl-alpha-D-glucosamine site. Asparagine 227 serves as a coordination point for Mg(2+). The segment at 230-250 (VALSQAEGTMRKRINHEHMVN) is linker. Positions 251 to 458 (GVTLIDPATT…AKKMPHYRGQ (208 aa)) are N-acetyltransferase. UDP-N-acetyl-alpha-D-glucosamine contacts are provided by arginine 332 and lysine 350. The active-site Proton acceptor is the histidine 362. 2 residues coordinate UDP-N-acetyl-alpha-D-glucosamine: tyrosine 365 and asparagine 376. The acetyl-CoA site is built by alanine 379, serine 404, alanine 422, and arginine 439.

In the N-terminal section; belongs to the N-acetylglucosamine-1-phosphate uridyltransferase family. The protein in the C-terminal section; belongs to the transferase hexapeptide repeat family. In terms of assembly, homotrimer. Mg(2+) serves as cofactor.

It is found in the cytoplasm. It carries out the reaction alpha-D-glucosamine 1-phosphate + acetyl-CoA = N-acetyl-alpha-D-glucosamine 1-phosphate + CoA + H(+). It catalyses the reaction N-acetyl-alpha-D-glucosamine 1-phosphate + UTP + H(+) = UDP-N-acetyl-alpha-D-glucosamine + diphosphate. It functions in the pathway nucleotide-sugar biosynthesis; UDP-N-acetyl-alpha-D-glucosamine biosynthesis; N-acetyl-alpha-D-glucosamine 1-phosphate from alpha-D-glucosamine 6-phosphate (route II): step 2/2. It participates in nucleotide-sugar biosynthesis; UDP-N-acetyl-alpha-D-glucosamine biosynthesis; UDP-N-acetyl-alpha-D-glucosamine from N-acetyl-alpha-D-glucosamine 1-phosphate: step 1/1. The protein operates within bacterial outer membrane biogenesis; LPS lipid A biosynthesis. Functionally, catalyzes the last two sequential reactions in the de novo biosynthetic pathway for UDP-N-acetylglucosamine (UDP-GlcNAc). The C-terminal domain catalyzes the transfer of acetyl group from acetyl coenzyme A to glucosamine-1-phosphate (GlcN-1-P) to produce N-acetylglucosamine-1-phosphate (GlcNAc-1-P), which is converted into UDP-GlcNAc by the transfer of uridine 5-monophosphate (from uridine 5-triphosphate), a reaction catalyzed by the N-terminal domain. In Lactococcus lactis subsp. cremoris (strain SK11), this protein is Bifunctional protein GlmU.